We begin with the raw amino-acid sequence, 317 residues long: Acetyl-coenzyme A carboxylase carboxyl transferase subunit alpha (317 aa).

A CoA carboxyltransferase C-terminal domain is found at 40–293 (LEVRVREAIL…GDVIANALAE (254 aa)).

It belongs to the AccA family. As to quaternary structure, acetyl-CoA carboxylase is a heterohexamer composed of biotin carboxyl carrier protein (AccB), biotin carboxylase (AccC) and two subunits each of ACCase subunit alpha (AccA) and ACCase subunit beta (AccD).

It localises to the cytoplasm. The enzyme catalyses N(6)-carboxybiotinyl-L-lysyl-[protein] + acetyl-CoA = N(6)-biotinyl-L-lysyl-[protein] + malonyl-CoA. It functions in the pathway lipid metabolism; malonyl-CoA biosynthesis; malonyl-CoA from acetyl-CoA: step 1/1. In terms of biological role, component of the acetyl coenzyme A carboxylase (ACC) complex. First, biotin carboxylase catalyzes the carboxylation of biotin on its carrier protein (BCCP) and then the CO(2) group is transferred by the carboxyltransferase to acetyl-CoA to form malonyl-CoA. This Rhizobium etli (strain CIAT 652) protein is Acetyl-coenzyme A carboxylase carboxyl transferase subunit alpha.